Reading from the N-terminus, the 353-residue chain is Probable peptide ABC transporter ATP-binding protein y4tS (353 aa).

Residues 6-256 enclose the ABC transporter domain; it reads LKVESLTKHY…PVHPYTEALI (251 aa). 49–56 lines the ATP pocket; that stretch reads GESGCGKS.

This sequence belongs to the ABC transporter superfamily.

It is found in the cell inner membrane. Functionally, probably part of a binding-protein-dependent transport system y4tOPQRS for a peptide. Probably responsible for energy coupling to the transport system. This is Probable peptide ABC transporter ATP-binding protein y4tS from Sinorhizobium fredii (strain NBRC 101917 / NGR234).